The sequence spans 610 residues: Elongation factor 4 (610 aa).

Residues 15–197 (KSIRNFSIIA…RIINDIPYPK (183 aa)) enclose the tr-type G domain. Residues 27–32 (DHGKST) and 144–147 (NKID) each bind GTP.

This sequence belongs to the TRAFAC class translation factor GTPase superfamily. Classic translation factor GTPase family. LepA subfamily.

The protein resides in the cell membrane. It carries out the reaction GTP + H2O = GDP + phosphate + H(+). Functionally, required for accurate and efficient protein synthesis under certain stress conditions. May act as a fidelity factor of the translation reaction, by catalyzing a one-codon backward translocation of tRNAs on improperly translocated ribosomes. Back-translocation proceeds from a post-translocation (POST) complex to a pre-translocation (PRE) complex, thus giving elongation factor G a second chance to translocate the tRNAs correctly. Binds to ribosomes in a GTP-dependent manner. This Buchnera aphidicola subsp. Acyrthosiphon pisum (strain 5A) protein is Elongation factor 4.